The following is a 190-amino-acid chain: Zinc metalloproteinase/disintegrin (190 aa).

The Peptidase M12B domain maps to 1–11 (NHNPECIVNEP). Residues 19 to 105 (PPVCGNELLE…ECPADVFHKN (87 aa)) enclose the Disintegrin domain. Residues V21, N24, L26, E28, E31, and D34 each contribute to the Ca(2+) site. Intrachain disulfides connect C33–C51, C35–C46, C45–C68, C59–C65, C64–C90, and C77–C97. Positions 83–85 (ECD) match the D/ECD-tripeptide motif. Residues D85, P86, E88, D100, and V101 each coordinate Ca(2+). Positions 104-190 (KNGQPCLDNY…DNSPGQNGPC (87 aa)) are excised as a propeptide.

This sequence belongs to the venom metalloproteinase (M12B) family. P-III subfamily. In terms of assembly, monomer. Requires Zn(2+) as cofactor. As to expression, expressed by the venom gland.

It localises to the secreted. In terms of biological role, impairs hemostasis in the envenomed animal. Its function is as follows. Inhibits platelet aggregation induced by ADP, thrombin, platelet-activating factor and collagen. Acts by inhibiting fibrinogen interaction with platelet receptors GPIIb/GPIIIa (ITGA2B/ITGB3). The polypeptide is Zinc metalloproteinase/disintegrin (Gloydius brevicauda (Korean slamosa snake)).